A 357-amino-acid chain; its full sequence is Probable cinnamyl alcohol dehydrogenase 2 (357 aa).

C47 provides a ligand contact to Zn(2+). S49 is an NADP(+) binding site. Positions 69, 70, 100, 103, 106, 114, and 163 each coordinate Zn(2+). Residues T167, 188–193 (GLGGVG), 211–216 (SSSNKK), T251, G275, and 298–300 (SFI) each bind NADP(+).

Belongs to the zinc-containing alcohol dehydrogenase family. As to quaternary structure, homodimer. It depends on Zn(2+) as a cofactor. The N-terminus is blocked.

The catalysed reaction is (E)-cinnamyl alcohol + NADP(+) = (E)-cinnamaldehyde + NADPH + H(+). It catalyses the reaction (E)-coniferol + NADP(+) = (E)-coniferaldehyde + NADPH + H(+). The enzyme catalyses (E)-sinapyl alcohol + NADP(+) = (E)-sinapaldehyde + NADPH + H(+). It carries out the reaction (E)-4-coumaroyl alcohol + NADP(+) = (E)-4-coumaraldehyde + NADPH + H(+). The catalysed reaction is (E)-caffeyl alcohol + NADP(+) = (E)-caffeyl aldehyde + NADPH + H(+). Its pathway is aromatic compound metabolism; phenylpropanoid biosynthesis. Involved in lignin biosynthesis. Catalyzes the final step specific for the production of lignin monomers. Catalyzes the NADPH-dependent reduction of coniferaldehyde, 5-hydroxyconiferaldehyde, sinapaldehyde, 4-coumaraldehyde and caffeyl aldehyde to their respective alcohols. This Nicotiana tabacum (Common tobacco) protein is Probable cinnamyl alcohol dehydrogenase 2 (CAD19).